Reading from the N-terminus, the 222-residue chain is Large ribosomal subunit protein uL1 (222 aa).

The protein belongs to the universal ribosomal protein uL1 family. Part of the 50S ribosomal subunit.

Functionally, binds directly to 23S rRNA. Probably involved in E site tRNA release. Its function is as follows. Protein L1 is also a translational repressor protein, it controls the translation of its operon by binding to its mRNA. The sequence is that of Large ribosomal subunit protein uL1 from Pyrobaculum neutrophilum (strain DSM 2338 / JCM 9278 / NBRC 100436 / V24Sta) (Thermoproteus neutrophilus).